The sequence spans 993 residues: Signal peptide, CUB and EGF-like domain-containing protein 3 (993 aa).

Positions 1–20 (MGSGRVPGLCLLLLLVHARA) are cleaved as a signal peptide. An EGF-like 1; calcium-binding domain is found at 29 to 69 (DVDECVEGTDNCHIDAICQNTPRSYKCICKSGYTGDGKHCK). 26 disulfide bridges follow: Cys-33–Cys-46, Cys-40–Cys-55, Cys-57–Cys-68, Cys-74–Cys-86, Cys-82–Cys-95, Cys-97–Cys-110, Cys-116–Cys-127, Cys-123–Cys-136, Cys-161–Cys-172, Cys-168–Cys-182, Cys-184–Cys-197, Cys-201–Cys-212, Cys-208–Cys-221, Cys-223–Cys-236, Cys-240–Cys-251, Cys-247–Cys-260, Cys-262–Cys-275, Cys-281–Cys-292, Cys-288–Cys-301, Cys-303–Cys-316, Cys-322–Cys-332, Cys-328–Cys-341, Cys-343–Cys-355, Cys-361–Cys-372, Cys-368–Cys-381, and Cys-383–Cys-397. One can recognise an EGF-like 2; calcium-binding domain in the interval 70 to 111 (DVDECEREDNAGCVHDCVNIPGNYRCTCYDGFHLAHDGHNCL). Residues 112–148 (DVDECAEGNGGCQQSCVNMMGSYECHCRDGFFLSDNQ) form the EGF-like 3; calcium-binding domain. 3 consecutive EGF-like domains span residues 157–198 (EGMN…RDCK), 199–237 (LTCN…KTCI), and 238–276 (ETCA…KTCK). Residues 277–317 (DIDECRLNNGGCDHICRNTVGSFECSCKKGYKLLINERSCQ) form the EGF-like 7; calcium-binding domain. In terms of domain architecture, EGF-like 8; calcium-binding spans 318-356 (DIDECSFDRTCDHMCVNTPGSFQCLCHRGYLLYGVTHCG). The 42-residue stretch at 357 to 398 (DVDECSINKGGCRFGCINTPGSYQCTCPAGQGRLHWNGKDCT) folds into the EGF-like 9; calcium-binding domain. Residues Asn-417, Asn-464, Asn-685, Asn-756, and Asn-785 are each glycosylated (N-linked (GlcNAc...) asparagine). Disulfide bonds link Cys-804–Cys-830 and Cys-857–Cys-878. A CUB domain is found at 804-916 (CGGELGEFTG…RGFQIPYVTY (113 aa)).

In terms of assembly, forms homooligomers. Forms heterooligomers with SCUBE1 and SCUBE2. Interacts with TGFBR2 through the CUB domain; this interaction does not affect TGFB1-binding to TGFBR2. Interacts with BMP2, BMP4 and BMP7; the interaction is mediated by the CUB domain. Interacts with BMPR1A, BMPR1B and BMPR2; the interaction with BMPR1A and BMPR1B is BMP2- and BMP4-dependent. Post-translationally, N-glycosylated. Proteolytic cleavage produces a CUB-containing C-terminal fragment that retains the ability to bind to TGFBR2. This reaction is catalyzed in vitro by MMP2 and, to a lesser extent, by MMP9. Highly expressed in femur and humerus with little or no expression in non-bone tissues.

Its subcellular location is the secreted. It localises to the cell surface. Is a positive regulator of the BMP signaling pathway, required for proper chondrogenesis, osteogenesis and skeletal development. It acts as a coreceptor for BMP ligands, particularly BMP2 and BMP4, facilitating their interactions with BMP type I receptors. It is required for ligand-induced recruitment of BMP receptors to lipid rafts. Binds to TGFBR2 and activates TGFB signaling. The chain is Signal peptide, CUB and EGF-like domain-containing protein 3 from Mus musculus (Mouse).